A 160-amino-acid polypeptide reads, in one-letter code: Thebaine synthase 2 (160 aa).

Ser74 lines the thebaine pocket. His89 serves as the catalytic Proton acceptor. Thr105 lines the thebaine pocket.

The protein belongs to the MLP family. As to quaternary structure, homodimer (allosteric) and oligomers. As to expression, expressed in poppy latex.

It catalyses the reaction (7S)-O-acetylsalutaridinol = thebaine + acetate + H(+). The protein operates within alkaloid biosynthesis; morphine biosynthesis. With respect to regulation, slightly inhibited by salutaridine and (7S)-salutaridinol. Catalyzes the formation of thebaine from (7S)-salutaridinol 7-O-acetate at the expense of labile hydroxylated by-products, which are preferentially produced by spontaneous allylic elimination. No visible activity toward (7S)-salutaridinol (at pH 7). This Papaver somniferum (Opium poppy) protein is Thebaine synthase 2.